A 203-amino-acid polypeptide reads, in one-letter code: Small ribosomal subunit protein uS4 (203 aa).

The S4 RNA-binding domain maps to 93–154; the sequence is CRFDNVVFRA…KSRNMDAVRN (62 aa).

It belongs to the universal ribosomal protein uS4 family. In terms of assembly, part of the 30S ribosomal subunit. Contacts protein S5. The interaction surface between S4 and S5 is involved in control of translational fidelity.

One of the primary rRNA binding proteins, it binds directly to 16S rRNA where it nucleates assembly of the body of the 30S subunit. Functionally, with S5 and S12 plays an important role in translational accuracy. This chain is Small ribosomal subunit protein uS4, found in Chloroherpeton thalassium (strain ATCC 35110 / GB-78).